A 62-amino-acid polypeptide reads, in one-letter code: Delta-theraphotoxin-Cg1a 1 (62 aa).

Residues 1-21 form the signal peptide; it reads MKTSILFVIFSLALLFALSAA. Residues 22–29 constitute a propeptide that is removed on maturation; that stretch reads TEIEETDR. 3 cysteine pairs are disulfide-bonded: cysteine 31–cysteine 46, cysteine 38–cysteine 51, and cysteine 45–cysteine 58.

Belongs to the neurotoxin 10 (Hwtx-1) family. 33 (Jztx-1) subfamily. In terms of tissue distribution, expressed by the venom gland.

Its subcellular location is the secreted. In terms of biological role, inhibits voltage-gated sodium channels, preferentially subtype Nav1.5/SCN5A (in cardiac myocytes), but also Nav1.6/SCN8A and Nav1.7/SCN9A (TTX-sensitive Nav in rat DRG neurons) and invertebrate Nav (in insect neurons) as well as voltage-gated potassium channels of the subtype Kv2.1/KCNB1. Is suggested to bind to site 3 of the sodium channels and inhibit the inactivation of the activated channels, thereby blocking neuronal transmission. On potassium channels, inhibits activation of channels with an IC(50) of 8.05 uM through a voltage sensor-trapping mechanism. Increases muscle contraction in several assays (mouse phrenic nerve-diaphragm, toad heart, rat vas deferens) and is suggested to act both presynaptically and postsynaptically. Functionally, moderately inhibits voltage-gated sodium channels and weakly inhibits voltage-gated potassium channel. Inhibits the inactivation of rat Nav1.2/SCN2A (IC(50)=870 nM), rat Nav1.3/SCN3A (IC(50)=845 nM), rat Nav1.4/SCN4A (IC(50)=339 nM), human Nav1.5/SCN5A (IC(50)=335 nM) and human Nav1.7/SCN9A sodium channels (IC(50)=348 nM). The toxin delays the inactivation of sodium channels without affecting the activation and steady-state inactivation kinetics in the physiological range of voltages. Site-directed mutagenesis of the sodium channel indicates that the toxin interacts with site 3 located at the extracellular S3-S4 linker of domain IV. On potassium channels, it inhibits activation of channels with an IC(50) of 8.05 uM through a voltage sensor-trapping mechanism. It increases muscle contraction in several assays (mouse phrenic nerve-diaphragm, toad heart, rat vas deferens) and is suggested to act both presynaptically and postsynaptically. This chain is Delta-theraphotoxin-Cg1a 1, found in Chilobrachys guangxiensis (Chinese earth tiger tarantula).